Reading from the N-terminus, the 602-residue chain is MGAPDEVLNIAPDEGDKLRAKALAADAEELPAGYYTSPRVVCTFMSISLTLLSTYFAFEASAAAISFIIEDIGPSENVSLFSTVWTVSQSISILLMGRLTDRFGRRGFILGTNCVGIIGGIGCLYSFQRFNTMIGAQVLLGLAAGQPGACILFIGELMSNKTKFLGNVIVAFPNVIATGFGPYIGQSLGINGNWRWIFYIYIIITAVSTVLAFIFYHPPSFAQLHGKKISRRDELLKVDWIGAFFLTAGMTLFLLGVSWGGSPDPWDSPKILGLLISGIVSCVIFVLYECYAKIDRPIIPMEFFPGTFAGFGCMLLISGVMGSMNTALFIMYPQQVQHIFSSTLSSWQEVAWMSSTAGFGIWAGIVTLGSLFHIFRHIRWQLIFGSAWVTAFLGAMASVNRHKKSEAIAFSICTGFVIGWAEDVTMLLVQFISSDENLGVTFSVVSATRAICGSIFTAAFISLYTIKFPGQLQSKLVPAVPRRWGFPGVLLVAGFAYWRALTGQCPSYWLLFPGMTSNLIQVTNDAVADSYAAAYSYVYYFAMALGVIAIIASACTKDFDHYLTSHVPHQIYAAKDADVDLLDSDRSTENVSSAAVTVSEKE.

Transmembrane regions (helical) follow at residues 49–69 (LTLL…SFII), 77–97 (NVSL…LLMG), 107–127 (GFIL…LYSF), and 134–154 (IGAQ…ILFI). A glycan (N-linked (GlcNAc...) asparagine) is linked at N160. 11 consecutive transmembrane segments (helical) span residues 164-184 (FLGN…GPYI), 196-216 (WIFY…FIFY), 240-260 (WIGA…VSWG), 271-291 (ILGL…YECY), 297-317 (PIIP…MLLI), 355-375 (STAG…FHIF), 380-400 (WQLI…ASVN), 408-428 (IAFS…TMLL), 450-470 (AICG…KFPG), 484-504 (WGFP…LTGQ), and 532-552 (AAAY…AIIA). N-linked (GlcNAc...) asparagine glycosylation occurs at N590.

This sequence belongs to the major facilitator superfamily.

The protein localises to the cell membrane. Functionally, efflux pump that provides the dual role of trichothecene export and self-protection by allowing the fungus to evade the harmful effect of its own trichothecene production. The protein is Trichothecene efflux pump TRI12 of Trichoderma arundinaceum.